The following is a 648-amino-acid chain: MPNIAILNQETIDKIAAGEVVERPCSVVKELVENAIDAGSTAITVEIKEGGISFIRITDNGCGIERDQVAVAFYRHSTSKIRSAEDLLTVKSLGFRGEALSSISAVARVELITKTYDELTGTRYVIEGSKELSNEEIGAPDGTTFIVKDLFYNVPARRKFLKTAQTEGSYISDMVEKLALSHPDISFKFINNNQTKLHTSGNGNRKDIIYHIFGREISSSLLEVKHECEYFKVEGFIGKPVITRGNRNYENYFINGRYVKSNILSRAIEEAYKSFLMQHQYPFTVLYFTFFSELDVNVHPTKMELRFDNNNEIYVELCDTIYAILAHKEMIPEVPVDSTPAPKKIVHEYKEPIPEPFEKRRINEVRAAESRSVYGQSVTATVKSSTVKGPAVNEPLTENTLNQQKVKTSASTPVVHTGNSVEPKPETSTAYEPAHVVTGTQQTLGDYDKVFLTESAKKQFSIIGQLFKTYWLIEFEDKLYIIDQHAAHEKVLYEKTMARLANKDFTSQRISPPIVMTLDARECEMLEKYRPQIEQFGYEVEHFGGKEYMISAIPDNLFNIDMKDLFIEMLDDFSNATGRQTPDIITEKVASMSCKAAVKGNDKLTLPEINKLIDELLSLDNPYNCPHGRPTIISMSKYEIEKKFKRIV.

The tract at residues 385–430 (STVKGPAVNEPLTENTLNQQKVKTSASTPVVHTGNSVEPKPETSTA) is disordered. A compositionally biased stretch (polar residues) spans 396 to 430 (LTENTLNQQKVKTSASTPVVHTGNSVEPKPETSTA).

Belongs to the DNA mismatch repair MutL/HexB family.

Its function is as follows. This protein is involved in the repair of mismatches in DNA. It is required for dam-dependent methyl-directed DNA mismatch repair. May act as a 'molecular matchmaker', a protein that promotes the formation of a stable complex between two or more DNA-binding proteins in an ATP-dependent manner without itself being part of a final effector complex. This is DNA mismatch repair protein MutL from Agathobacter rectalis (strain ATCC 33656 / DSM 3377 / JCM 17463 / KCTC 5835 / VPI 0990) (Eubacterium rectale).